We begin with the raw amino-acid sequence, 319 residues long: V-set and transmembrane domain-containing protein 4 (319 aa).

A signal peptide spans 1 to 23; sequence MRLRLLALAAAVLLGPAPEVCGA. Positions 24-154 constitute an Ig-like domain; the sequence is LNVTVSPGPV…SSATEMRVIS (131 aa). N-linked (GlcNAc...) asparagine glycans are attached at residues asparagine 25 and asparagine 41. A disulfide bond links cysteine 46 and cysteine 126. N-linked (GlcNAc...) asparagine glycosylation occurs at asparagine 143. Residues 180 to 200 form a helical membrane-spanning segment; that stretch reads AVLVCCVGILSVLLFTLVIAW.

Post-translationally, proteolytically cleaved to generate a bioactive peptide. As to expression, peptide Lv is widely expressed in various tissues and the central nervous system, including the retinal photoreceptor layer, hippocampus, olfactory bulb, and cerebellum.

The protein localises to the cell membrane. The protein resides in the secreted. Functionally, peptide Lv enhances L-type voltage-gated calcium channel (L-VGCC) currents in retinal photoreceptors. The chain is V-set and transmembrane domain-containing protein 4 (Vstm4) from Mus musculus (Mouse).